The following is a 421-amino-acid chain: Testin (421 aa).

Positions 92–199 (MILTNPVAAR…GDVKLPCELD (108 aa)) constitute a PET domain. Positions 134 to 164 (KQPVAGSEGAQYRKKQLAKQLPAHDQDPSKC) are disordered. Over residues 155–164 (PAHDQDPSKC) the composition is skewed to basic and acidic residues. 3 consecutive LIM zinc-binding domains span residues 234–297 (YSCY…CDSE), 299–359 (PRCA…NHAV), and 362–421 (QGCH…KMMS).

The protein belongs to the prickle / espinas / testin family. As to quaternary structure, interacts via LIM domain 1 with ZYX. Interacts (via LIM domain 3) with ENAH and VASP. Interacts with ALKBH4, talin, actin, alpha-actinin, GRIP1 and PXN. Interacts (via LIM domain 2) with ACTL7A (via N-terminus). Heterodimer with ACTL7A; the heterodimer interacts with ENAH to form a heterotrimer.

Its subcellular location is the cytoplasm. It localises to the cell junction. The protein localises to the focal adhesion. Functionally, scaffold protein that may play a role in cell adhesion, cell spreading and in the reorganization of the actin cytoskeleton. Plays a role in the regulation of cell proliferation. May act as a tumor suppressor. The chain is Testin (TES) from Eulemur macaco macaco (Black lemur).